Reading from the N-terminus, the 728-residue chain is Procollagen-lysine,2-oxoglutarate 5-dioxygenase 1 (728 aa).

Residues Met-1–Ala-18 form the signal peptide. N-linked (GlcNAc...) asparagine glycans are attached at residues Asn-177, Asn-198, and Asn-539. The Fe2OG dioxygenase domain maps to Gln-637–Pro-728. Residues His-657 and Asp-659 each contribute to the Fe cation site. N-linked (GlcNAc...) asparagine glycosylation occurs at Asn-687. His-709 lines the Fe cation pocket. Arg-719 is an active-site residue.

As to quaternary structure, homodimer. Identified in a complex with P3H3 and P3H4. It depends on Fe(2+) as a cofactor. The cofactor is L-ascorbate.

It is found in the rough endoplasmic reticulum membrane. It carries out the reaction L-lysyl-[collagen] + 2-oxoglutarate + O2 = (5R)-5-hydroxy-L-lysyl-[collagen] + succinate + CO2. Functionally, part of a complex composed of PLOD1, P3H3 and P3H4 that catalyzes hydroxylation of lysine residues in collagen alpha chains and is required for normal assembly and cross-linkling of collagen fibrils. Forms hydroxylysine residues in -Xaa-Lys-Gly- sequences in collagens. These hydroxylysines serve as sites of attachment for carbohydrate units and are essential for the stability of the intermolecular collagen cross-links. The protein is Procollagen-lysine,2-oxoglutarate 5-dioxygenase 1 (Plod1) of Rattus norvegicus (Rat).